We begin with the raw amino-acid sequence, 123 residues long: Protein Wnt-7 (123 aa).

The O-palmitoleoyl serine; by PORCN moiety is linked to residue Ser1. The cysteines at positions 89 and 104 are disulfide-linked. Asn90 is a glycosylation site (N-linked (GlcNAc...) asparagine).

This sequence belongs to the Wnt family. Post-translationally, palmitoleoylation is required for efficient binding to frizzled receptors. Depalmitoleoylation leads to Wnt signaling pathway inhibition.

It localises to the secreted. It is found in the extracellular space. Its subcellular location is the extracellular matrix. Functionally, ligand for members of the frizzled family of seven transmembrane receptors. Probable developmental protein. May be a signaling molecule which affects the development of discrete regions of tissues. Is likely to signal over only few cell diameters. This Evasterias troschelii (Mottled sea star) protein is Protein Wnt-7 (WNT-7).